A 373-amino-acid chain; its full sequence is Glutamate 5-kinase (373 aa).

K15 serves as a coordination point for ATP. Positions 55, 142, and 154 each coordinate substrate. ATP is bound by residues T174–D175 and T216–K222. Residues A281–R359 enclose the PUA domain.

Belongs to the glutamate 5-kinase family.

The protein localises to the cytoplasm. It carries out the reaction L-glutamate + ATP = L-glutamyl 5-phosphate + ADP. It functions in the pathway amino-acid biosynthesis; L-proline biosynthesis; L-glutamate 5-semialdehyde from L-glutamate: step 1/2. Functionally, catalyzes the transfer of a phosphate group to glutamate to form L-glutamate 5-phosphate. This Citrifermentans bemidjiense (strain ATCC BAA-1014 / DSM 16622 / JCM 12645 / Bem) (Geobacter bemidjiensis) protein is Glutamate 5-kinase.